Here is a 401-residue protein sequence, read N- to C-terminus: Lipoyl synthase 1, mitochondrial (401 aa).

The N-terminal 25 residues, 1-25, are a transit peptide targeting the mitochondrion; that stretch reads MWSSSSSLCRNPSFRRAWLSTVTVT. Residues 49–79 are disordered; it reads IDDFSSTNAPTTTTHYTSSNGSPIVRQKAAP. The segment covering 51 to 70 has biased composition (polar residues); the sequence is DFSSTNAPTTTTHYTSSNGS. Residues C117, C122, C128, C148, C152, C155, and S376 each coordinate [4Fe-4S] cluster. Positions 133–365 constitute a Radical SAM core domain; it reads EDQTATATIM…QETAMGMGFA (233 aa).

The protein belongs to the radical SAM superfamily. Lipoyl synthase family. The cofactor is [4Fe-4S] cluster.

The protein resides in the mitochondrion. It carries out the reaction [[Fe-S] cluster scaffold protein carrying a second [4Fe-4S](2+) cluster] + N(6)-octanoyl-L-lysyl-[protein] + 2 oxidized [2Fe-2S]-[ferredoxin] + 2 S-adenosyl-L-methionine + 4 H(+) = [[Fe-S] cluster scaffold protein] + N(6)-[(R)-dihydrolipoyl]-L-lysyl-[protein] + 4 Fe(3+) + 2 hydrogen sulfide + 2 5'-deoxyadenosine + 2 L-methionine + 2 reduced [2Fe-2S]-[ferredoxin]. Its pathway is protein modification; protein lipoylation via endogenous pathway; protein N(6)-(lipoyl)lysine from octanoyl-[acyl-carrier-protein]: step 2/2. In terms of biological role, catalyzes the radical-mediated insertion of two sulfur atoms into the C-6 and C-8 positions of the octanoyl moiety bound to the lipoyl domains of lipoate-dependent enzymes, thereby converting the octanoylated domains into lipoylated derivatives. In Phaeodactylum tricornutum (strain CCAP 1055/1), this protein is Lipoyl synthase 1, mitochondrial.